The chain runs to 428 residues: Dihydroorotase (428 aa).

Positions 59 and 61 each coordinate Zn(2+). Substrate contacts are provided by residues 61–63 and Asn-93; that span reads HLR. Residues Asp-151, His-178, and His-231 each coordinate Zn(2+). Asn-277 serves as a coordination point for substrate. Asp-304 is a Zn(2+) binding site. Residue Asp-304 is part of the active site. Substrate contacts are provided by residues His-308 and 322 to 323; that span reads FG.

Belongs to the metallo-dependent hydrolases superfamily. DHOase family. Class I DHOase subfamily. Zn(2+) serves as cofactor.

It catalyses the reaction (S)-dihydroorotate + H2O = N-carbamoyl-L-aspartate + H(+). It participates in pyrimidine metabolism; UMP biosynthesis via de novo pathway; (S)-dihydroorotate from bicarbonate: step 3/3. In terms of biological role, catalyzes the reversible cyclization of carbamoyl aspartate to dihydroorotate. This chain is Dihydroorotase, found in Bacillus anthracis (strain A0248).